Here is a 509-residue protein sequence, read N- to C-terminus: ATP synthase subunit alpha (509 aa).

169-176 contributes to the ATP binding site; the sequence is GDRQTGKT.

Belongs to the ATPase alpha/beta chains family. F-type ATPases have 2 components, CF(1) - the catalytic core - and CF(0) - the membrane proton channel. CF(1) has five subunits: alpha(3), beta(3), gamma(1), delta(1), epsilon(1). CF(0) has three main subunits: a(1), b(2) and c(9-12). The alpha and beta chains form an alternating ring which encloses part of the gamma chain. CF(1) is attached to CF(0) by a central stalk formed by the gamma and epsilon chains, while a peripheral stalk is formed by the delta and b chains.

The protein resides in the cell inner membrane. The enzyme catalyses ATP + H2O + 4 H(+)(in) = ADP + phosphate + 5 H(+)(out). Functionally, produces ATP from ADP in the presence of a proton gradient across the membrane. The alpha chain is a regulatory subunit. The polypeptide is ATP synthase subunit alpha (Bradyrhizobium diazoefficiens (strain JCM 10833 / BCRC 13528 / IAM 13628 / NBRC 14792 / USDA 110)).